Here is a 218-residue protein sequence, read N- to C-terminus: Probable nicotinate-nucleotide adenylyltransferase (218 aa).

This sequence belongs to the NadD family.

It carries out the reaction nicotinate beta-D-ribonucleotide + ATP + H(+) = deamido-NAD(+) + diphosphate. Its pathway is cofactor biosynthesis; NAD(+) biosynthesis; deamido-NAD(+) from nicotinate D-ribonucleotide: step 1/1. Its function is as follows. Catalyzes the reversible adenylation of nicotinate mononucleotide (NaMN) to nicotinic acid adenine dinucleotide (NaAD). The protein is Probable nicotinate-nucleotide adenylyltransferase of Halorhodospira halophila (strain DSM 244 / SL1) (Ectothiorhodospira halophila (strain DSM 244 / SL1)).